Reading from the N-terminus, the 765-residue chain is Probable serine/threonine-protein kinase DDB_G0271402 (765 aa).

The 294-residue stretch at 35 to 328 folds into the Protein kinase domain; it reads LEFGQEIGKG…KEITERLKSL (294 aa). ATP contacts are provided by residues 41 to 49 and lysine 62; that span reads IGKGAYGKI. Residue aspartate 192 is the Proton acceptor of the active site. 7 disordered regions span residues 371–393, 443–477, 491–527, 545–620, 654–684, 699–738, and 746–765; these read IVHN…NNSN, SMGD…KIIN, SSDL…NNNS, PIQI…QQYQ, PLNI…HHHL, IISS…PTNI, and ASNS…TVQS. The span at 446-458 shows a compositional bias: acidic residues; the sequence is DESDLDSDDEDDS. Composition is skewed to low complexity over residues 459–470, 499–527, 562–605, 662–678, and 699–720; these read YTSSASSSRCNS, NGNN…NNNS, PPTS…PKSN, NNNN…GNVN, and IISS…SLTS.

Belongs to the protein kinase superfamily. TKL Ser/Thr protein kinase family.

It carries out the reaction L-seryl-[protein] + ATP = O-phospho-L-seryl-[protein] + ADP + H(+). It catalyses the reaction L-threonyl-[protein] + ATP = O-phospho-L-threonyl-[protein] + ADP + H(+). The protein is Probable serine/threonine-protein kinase DDB_G0271402 of Dictyostelium discoideum (Social amoeba).